The following is a 146-amino-acid chain: Holo-[acyl-carrier-protein] synthase (146 aa).

Mg(2+) contacts are provided by aspartate 9 and glutamate 63.

Belongs to the P-Pant transferase superfamily. AcpS family. The cofactor is Mg(2+).

It is found in the cytoplasm. It catalyses the reaction apo-[ACP] + CoA = holo-[ACP] + adenosine 3',5'-bisphosphate + H(+). In terms of biological role, transfers the 4'-phosphopantetheine moiety from coenzyme A to a Ser of acyl-carrier-protein. This is Holo-[acyl-carrier-protein] synthase from Burkholderia ambifaria (strain ATCC BAA-244 / DSM 16087 / CCUG 44356 / LMG 19182 / AMMD) (Burkholderia cepacia (strain AMMD)).